Here is a 334-residue protein sequence, read N- to C-terminus: Holliday junction branch migration complex subunit RuvB (334 aa).

A large ATPase domain (RuvB-L) region spans residues 1 to 182 (MDDRMIDGEL…FGVLSRLEYY (182 aa)). Residues L21, R22, G63, K66, T67, T68, 129–131 (EDF), R172, Y182, and R219 contribute to the ATP site. Residue T67 participates in Mg(2+) binding. Positions 183–253 (EIKDLCNIVE…STKQALEMLQ (71 aa)) are small ATPAse domain (RuvB-S). Residues 256–334 (DAGLDHVDHK…HLGIKRTGED (79 aa)) form a head domain (RuvB-H) region. Residues R311 and R316 each contribute to the DNA site.

This sequence belongs to the RuvB family. In terms of assembly, homohexamer. Forms an RuvA(8)-RuvB(12)-Holliday junction (HJ) complex. HJ DNA is sandwiched between 2 RuvA tetramers; dsDNA enters through RuvA and exits via RuvB. An RuvB hexamer assembles on each DNA strand where it exits the tetramer. Each RuvB hexamer is contacted by two RuvA subunits (via domain III) on 2 adjacent RuvB subunits; this complex drives branch migration. In the full resolvosome a probable DNA-RuvA(4)-RuvB(12)-RuvC(2) complex forms which resolves the HJ.

The protein localises to the cytoplasm. It carries out the reaction ATP + H2O = ADP + phosphate + H(+). In terms of biological role, the RuvA-RuvB-RuvC complex processes Holliday junction (HJ) DNA during genetic recombination and DNA repair, while the RuvA-RuvB complex plays an important role in the rescue of blocked DNA replication forks via replication fork reversal (RFR). RuvA specifically binds to HJ cruciform DNA, conferring on it an open structure. The RuvB hexamer acts as an ATP-dependent pump, pulling dsDNA into and through the RuvAB complex. RuvB forms 2 homohexamers on either side of HJ DNA bound by 1 or 2 RuvA tetramers; 4 subunits per hexamer contact DNA at a time. Coordinated motions by a converter formed by DNA-disengaged RuvB subunits stimulates ATP hydrolysis and nucleotide exchange. Immobilization of the converter enables RuvB to convert the ATP-contained energy into a lever motion, pulling 2 nucleotides of DNA out of the RuvA tetramer per ATP hydrolyzed, thus driving DNA branch migration. The RuvB motors rotate together with the DNA substrate, which together with the progressing nucleotide cycle form the mechanistic basis for DNA recombination by continuous HJ branch migration. Branch migration allows RuvC to scan DNA until it finds its consensus sequence, where it cleaves and resolves cruciform DNA. This Oceanobacillus iheyensis (strain DSM 14371 / CIP 107618 / JCM 11309 / KCTC 3954 / HTE831) protein is Holliday junction branch migration complex subunit RuvB.